The following is a 154-amino-acid chain: Large ribosomal subunit protein uL24 (154 aa).

The segment at 97–154 is disordered; the sequence is EIAARKNLPPPEVPEETSNDTKESDENVTGADKEETNEIKEEDLNDNEDKNNDGSQEA. A compositionally biased stretch (basic and acidic residues) spans 115–135; sequence NDTKESDENVTGADKEETNEI.

It belongs to the universal ribosomal protein uL24 family. In terms of assembly, part of the 50S ribosomal subunit.

In terms of biological role, one of two assembly initiator proteins, it binds directly to the 5'-end of the 23S rRNA, where it nucleates assembly of the 50S subunit. Located at the polypeptide exit tunnel on the outside of the subunit. This Picrophilus torridus (strain ATCC 700027 / DSM 9790 / JCM 10055 / NBRC 100828 / KAW 2/3) protein is Large ribosomal subunit protein uL24.